The chain runs to 287 residues: Orotidine 5'-phosphate decarboxylase (287 aa).

The Proton donor role is filled by Lys-99.

Belongs to the OMP decarboxylase family. Type 2 subfamily.

The enzyme catalyses orotidine 5'-phosphate + H(+) = UMP + CO2. It functions in the pathway pyrimidine metabolism; UMP biosynthesis via de novo pathway; UMP from orotate: step 2/2. The chain is Orotidine 5'-phosphate decarboxylase from Clostridium novyi (strain NT).